Consider the following 162-residue polypeptide: G/U mismatch-specific DNA glycosylase (162 aa).

Belongs to the uracil-DNA glycosylase (UDG) superfamily. TDG/mug family. In terms of assembly, binds DNA as a monomer.

The protein localises to the cytoplasm. It carries out the reaction Specifically hydrolyzes mismatched double-stranded DNA and polynucleotides, releasing free uracil.. Excises ethenocytosine and uracil, which can arise by alkylation or deamination of cytosine, respectively, from the corresponding mispairs with guanine in ds-DNA. It is capable of hydrolyzing the carbon-nitrogen bond between the sugar-phosphate backbone of the DNA and the mispaired base. The complementary strand guanine functions in substrate recognition. Required for DNA damage lesion repair in stationary-phase cells. The polypeptide is G/U mismatch-specific DNA glycosylase (Serratia marcescens).